The primary structure comprises 440 residues: Xaa-Pro dipeptidase (440 aa).

Mn(2+) is bound by residues aspartate 244, aspartate 255, histidine 335, glutamate 380, and glutamate 419.

It belongs to the peptidase M24B family. Bacterial-type prolidase subfamily. The cofactor is Mn(2+).

It carries out the reaction Xaa-L-Pro dipeptide + H2O = an L-alpha-amino acid + L-proline. Splits dipeptides with a prolyl residue in the C-terminal position. The chain is Xaa-Pro dipeptidase from Shewanella denitrificans (strain OS217 / ATCC BAA-1090 / DSM 15013).